Reading from the N-terminus, the 141-residue chain is Cystatin (141 aa).

An N-terminal signal peptide occupies residues 1 to 26 (MVRSQLPVAAPLRLLCALLLLPSATM). The Cystatin domain maps to 29-129 (GGLSPRSVTD…CHFQVWSRPW (101 aa)). Residues 73-77 (QVVSG) carry the Secondary area of contact motif. Intrachain disulfides connect Cys91–Cys107 and Cys120–Cys140.

This sequence belongs to the cystatin family. In terms of tissue distribution, expressed at a low level by the venom gland (at protein level).

Its subcellular location is the secreted. Its function is as follows. Inhibits various C1 cysteine proteases including cathepsin L, papain and cathepsin B. This protein has no toxic activity and its function in the venom is unknown. It may play a role as a housekeeping or regulatory protein. In Micropechis ikaheca (New Guinean small-eyed snake), this protein is Cystatin.